The chain runs to 547 residues: Inactive delta-guaiene synthase (547 aa).

Residues Asp-299, Asp-303, and Asp-444 each coordinate Mg(2+). Residues Asp-299–Asp-303 carry the DDXXD motif motif.

The protein belongs to the terpene synthase family. The cofactor is Mg(2+).

This chain is Inactive delta-guaiene synthase (C1), found in Aquilaria crassna (Eagle wood).